The sequence spans 211 residues: WW domain-containing protein WWM1 (211 aa).

Positions 9 to 43 constitute a WW domain; sequence PQVPSGWKAVFDDEYQTWYYVDLSTNSSQWEPPRG. The tract at residues 32 to 116 is disordered; the sequence is STNSSQWEPP…QRYYPQQAPM (85 aa). Residues Lys-50 and Lys-60 each participate in a glycyl lysine isopeptide (Lys-Gly) (interchain with G-Cter in ubiquitin) cross-link. Position 75 is a phosphoserine (Ser-75). Phosphothreonine is present on Thr-78. The segment covering 80–116 has biased composition (low complexity); the sequence is QVQAGAQAQQPRYYQPQQPQYPQYPQQQRYYPQQAPM.

Interacts with metacaspase MCA1.

The protein resides in the cytoplasm. Its subcellular location is the nucleus. The protein localises to the mitochondrion. Its function is as follows. Involved in apoptosis. May play a role in nuclear function controlling cellular proliferation coupled to mitochondrial biogenesis. Causes impaired growth when overexpressed. This chain is WW domain-containing protein WWM1 (WWM1), found in Saccharomyces cerevisiae (strain ATCC 204508 / S288c) (Baker's yeast).